Consider the following 229-residue polypeptide: V-type proton ATPase subunit E (229 aa).

Belongs to the V-ATPase E subunit family. As to quaternary structure, V-ATPase is a heteromultimeric enzyme composed of a peripheral catalytic V1 complex (components A to H) attached to an integral membrane V0 proton pore complex (components: a, c, c', c'' and d).

Its function is as follows. Subunit of the peripheral V1 complex of vacuolar ATPase essential for assembly or catalytic function. V-ATPase is responsible for acidifying a variety of intracellular compartments in eukaryotic cells. The chain is V-type proton ATPase subunit E (VATE) from Spinacia oleracea (Spinach).